Consider the following 430-residue polypeptide: Flavin-dependent monooxygenase eupH (430 aa).

FAD-binding positions include 11–14 (AGIG), 33–34 (ER), glutamine 43, arginine 107, tyrosine 282, and aspartate 306.

The protein belongs to the aromatic-ring hydroxylase family. FAD is required as a cofactor.

It functions in the pathway secondary metabolite biosynthesis; terpenoid biosynthesis. Functionally, flavin-dependent monooxygenase; part of the gene cluster that mediates the biosynthesis of eupenifeldin, a bistropolone meroterpenoid that acts as an antitumor agent. The first step of eupenifeldin biosynthesis is the biosynthesis of 3-methylorcinaldehyde performed by the non-reducing polyketide synthase eupA. Oxidative dearomatization of 3-methylorcinaldehyde likely catalyzed by the FAD-dependent monooxygenase eupB is followed by oxidative ring expansion by the 2-oxoglutarate-dependent dioxygenase eupC to provide the first tropolone metabolite, tropolone stipitaldehyde. In parallel, generation of sesquiterpene alpha-humulene from farnesylpyrophosphate (FPP) is catalyzed by the terpene cyclase eupE. The cytochrome P450 monooxygenase eupD then hydroxylates humulene to humulenol. The putative Diels-Alderase eupF probably catalyzes the formation of the tropolone-humulene skeleton by linking humulenol and the polyketide moiety. The short-chain dehydrogenase/reductase eupG and the flavin-dependent monooxygenase eupH are also essential for eupenifeldin biosynthesis and are likely the additional decorating enzymes of the tropolone-humulene skeleton to produce final eupenifeldin or derivatives. This Phoma sp protein is Flavin-dependent monooxygenase eupH.